The sequence spans 222 residues: Eukaryotic translation initiation factor 3 subunit K (222 aa).

The 163-residue stretch at 46 to 208 folds into the PCI domain; it reads YDLEANLAVL…KIKTKNITEK (163 aa).

It belongs to the eIF-3 subunit K family. In terms of assembly, component of the eukaryotic translation initiation factor 3 (eIF-3) complex. The eIF-3 complex interacts with pix.

Its subcellular location is the cytoplasm. Functionally, component of the eukaryotic translation initiation factor 3 (eIF-3) complex, which is involved in protein synthesis of a specialized repertoire of mRNAs and, together with other initiation factors, stimulates binding of mRNA and methionyl-tRNAi to the 40S ribosome. The eIF-3 complex specifically targets and initiates translation of a subset of mRNAs involved in cell proliferation. The polypeptide is Eukaryotic translation initiation factor 3 subunit K (Drosophila sechellia (Fruit fly)).